A 428-amino-acid polypeptide reads, in one-letter code: Trigger factor (428 aa).

One can recognise a PPIase FKBP-type domain in the interval 163 to 248; the sequence is GNIAVIDFKG…VKEIKVKELP (86 aa).

This sequence belongs to the FKBP-type PPIase family. Tig subfamily.

It is found in the cytoplasm. It catalyses the reaction [protein]-peptidylproline (omega=180) = [protein]-peptidylproline (omega=0). In terms of biological role, involved in protein export. Acts as a chaperone by maintaining the newly synthesized protein in an open conformation. Functions as a peptidyl-prolyl cis-trans isomerase. This is Trigger factor from Clostridium perfringens (strain ATCC 13124 / DSM 756 / JCM 1290 / NCIMB 6125 / NCTC 8237 / Type A).